Reading from the N-terminus, the 1039-residue chain is Protein male-specific lethal-1 (1039 aa).

A compositionally biased stretch (basic residues) spans 1 to 13; it reads MDKRFKWPPKKRA. 2 disordered regions span residues 1–44 and 171–199; these read MDKR…HLHQ and RRKN…QKLI. Ser18 is modified (phosphoserine). Residue Ser238 is modified to Phosphoserine. Disordered regions lie at residues 244 to 266, 358 to 454, 485 to 691, and 729 to 799; these read HAGA…GEFN, GQSV…GNQN, KKDK…EIDV, and IYPP…SSTT. The span at 255-266 shows a compositional bias: basic and acidic residues; the sequence is KRSESKGRGEFN. Residues 368–392 are compositionally biased toward acidic residues; that stretch reads EEDDDEDDEDDENSDKDDDSEEDDY. Over residues 397 to 407 the composition is skewed to basic and acidic residues; sequence SDADVNARTEE. A compositionally biased stretch (polar residues) spans 431-445; the sequence is AHSTPNHQQKSSTQA. Ser433 is modified (phosphoserine). Thr434 is modified (phosphothreonine). Phosphoserine occurs at positions 492 and 496. 2 stretches are compositionally biased toward basic and acidic residues: residues 504 to 515 and 523 to 570; these read PHQEDAIVDHNA and PKPD…DAPK. 2 stretches are compositionally biased toward polar residues: residues 581-592 and 609-625; these read TKTSSRESTLPK and NHQS…TQRL. Ser585 carries the post-translational modification Phosphoserine. A Phosphothreonine modification is found at Thr659. Phosphoserine is present on residues Ser682 and Ser684. Thr747 is subject to Phosphothreonine. A Phosphoserine modification is found at Ser749. Phosphothreonine occurs at positions 750, 751, and 753. Residues 759-768 are compositionally biased toward polar residues; the sequence is QHAVTSSMDQ. Phosphoserine is present on residues Ser764 and Ser765. Thr788 is modified (phosphothreonine). Ser810 carries the post-translational modification Phosphoserine. Thr813 and Thr832 each carry phosphothreonine. Residues 865–983 form the PEHE domain; that stretch reads SLEIPKWRDV…EARDDFGVPW (119 aa). Phosphoserine occurs at positions 879 and 889. Residues 886–904 are interaction with mof HAT domain; the sequence is ELLSDATFERRHQKYVKDE. Residues 1011 to 1039 form a disordered region; it reads IPTTAAEARHQENHSSYVFPKRRKRQKNR. Residue Thr1014 is modified to Phosphothreonine. Ser1025 is subject to Phosphoserine. Residues 1030–1039 are compositionally biased toward basic residues; the sequence is PKRRKRQKNR. Positions 1032 to 1037 match the Nuclear localization signal motif; it reads RRKRQK.

It belongs to the msl-1 family. In terms of assembly, component of the male-specific lethal (MSL) histone acetyltransferase complex, composed of mof, mle, msl-1, msl-2 and msl-3 proteins, as well as roX1 and roX2 non-coding RNAs. Interacts (via PEHE domain) with mof (via HAT domain) and msl-3 (via MRG domain); both interactions are direct. Interacts with tamo via the nuclear localization signal. Component of a maternal MSL subcomplex composed of mof, msl-1 and msl-3. In terms of processing, phosphorylation at Ser-18, Thr743, Thr-747 and Thr-751 is required to promote phosphorylation of 'Ser-5' of the C-terminal heptapeptide repeat domain (CTD) of the largest RNA polymerase II subunit Polr2A. Phosphorylated by Cdk7 in vitro. In contrast, phosphorylation at Ser-18, Thr743, Thr-747 and Thr-751 does not affect its role in dosage compensation in males. Post-translationally, ubiquitinated by msl-2.

It localises to the nucleus. Its subcellular location is the chromosome. Component of the male-specific lethal (MSL) histone acetyltransferase complex, a multiprotein complex essential for elevating transcription of the single X chromosome in the male (X chromosome dosage compensation). The MSL complex specifically associates with the single X chromosome in males and mediates formation of H4K16ac, promoting a two-fold activation of X chromosome. In complex with msl-2, promotes ubiquitination of histone H2B. In addition to its role in dosage compensation in males, regulates the activity of gene promoters: acts together with Cdk7 to promote phosphorylation of 'Ser-5' of the C-terminal heptapeptide repeat domain (CTD) of the largest RNA polymerase II subunit Polr2A. This is Protein male-specific lethal-1 from Drosophila melanogaster (Fruit fly).